Reading from the N-terminus, the 1042-residue chain is Atrial natriuretic peptide-converting enzyme (1042 aa).

The segment at 1-25 is disordered; it reads MKQSPALAPEERCRRAGSPKPVLRA. Residues 1–45 lie on the Cytoplasmic side of the membrane; it reads MKQSPALAPEERCRRAGSPKPVLRADDNNMGNGCSQKLATANLLR. The DDNN motif signature appears at 26 to 29; it reads DDNN. Residues 46–66 traverse the membrane as a helical; Signal-anchor for type II membrane protein segment; it reads FLLLVLIPCICALVLLLVILL. The Extracellular segment spans residues 67–1042; sequence SYVGTLQKVY…QIYIQTFLLN (976 aa). Asn80, Asn104, Asn135, and Asn141 each carry an N-linked (GlcNAc...) asparagine glycan. The FZ 1 domain maps to 134–259; the sequence is RNTSACMNIT…SNVSRICFSP (126 aa). 8 disulfide bridges follow: Cys139-Cys199, Cys147-Cys192, Cys183-Cys223, Cys212-Cys256, Cys216-Cys240, Cys269-Cys282, Cys277-Cys295, and Cys289-Cys304. 3 N-linked (GlcNAc...) asparagine glycosylation sites follow: Asn231, Asn245, and Asn251. 4 consecutive LDL-receptor class A domains span residues 268 to 304, 305 to 340, 341 to 377, and 378 to 415; these read LCGRGENFLCASGICIPGKLQCNGYNDCDDWSDEAHC, NCSENLFHCHTGKCLNYSLVCDGYDDCGDLSDEQNC, DCNPTTEHRCGDGRCIAMEWVCDGDHDCVDKSDEVNC, and SCHSQGLVECRNGQCIPSTFQCDGDEDCKDGSDEENCS. An N-linked (GlcNAc...) asparagine glycan is attached at Asn305. Cystine bridges form between Cys306–Cys318, Cys313–Cys331, Cys325–Cys340, Cys342–Cys355, Cys350–Cys368, Cys362–Cys377, Cys379–Cys392, Cys387–Cys405, and Cys399–Cys414. An N-linked (GlcNAc...) asparagine glycan is attached at Asn320. Residue Asn376 is glycosylated (N-linked (GlcNAc...) asparagine). N-linked (GlcNAc...) asparagine glycosylation is found at Asn413, Asn446, Asn451, and Asn469. In terms of domain architecture, FZ 2 spans 450 to 573; that stretch reads NNCSQCEPIT…NSDNQTCLMP (124 aa). Intrachain disulfides connect Cys455–Cys518, Cys463–Cys511, Cys502–Cys540, Cys529–Cys570, Cys533–Cys557, Cys580–Cys592, Cys587–Cys605, Cys599–Cys614, Cys616–Cys630, Cys624–Cys643, Cys637–Cys652, Cys655–Cys667, Cys662–Cys680, and Cys674–Cys689. Asn567 is a glycosylation site (N-linked (GlcNAc...) asparagine). LDL-receptor class A domains follow at residues 579–614, 615–653, and 654–689; these read ECSPSHFKCRSGQCVLASRRCDGQADCDDDSDEENC, GCKERDLWECPSNKQCLKHTVICDGFPDCPDYMDEKNCS, and FCQDDELECANHACVSRDLWCDGEADCSDSSDEWDC. The N-linked (GlcNAc...) asparagine glycan is linked to Asn651. The 112-residue stretch at 690 to 801 folds into the SRCR domain; that stretch reads VTLSINVNSS…RRPAARMNKR (112 aa). N-linked (GlcNAc...) asparagine glycans are attached at residues Asn697 and Asn761. 5 disulfides stabilise this stretch: Cys790/Cys912, Cys828/Cys844, Cys926/Cys991, Cys955/Cys970, and Cys981/Cys1010. Positions 802–1035 constitute a Peptidase S1 domain; that stretch reads ILGGRTSRPG…FVEWIKRQIY (234 aa). Residues His843 and Asp892 each act as charge relay system in the active site. Residue Ser985 is the Charge relay system of the active site. An N-linked (GlcNAc...) asparagine glycan is attached at Asn1022.

It belongs to the peptidase S1 family. In terms of processing, N-glycosylated; required for processing and activation. Post-translationally, activated through proteolytic processing by a trypsin-like protease; cleaved into a N-terminal propeptide and an activated corin protease fragment. Different soluble forms are produced by cleavage and autocatalytic cleavage: Atrial natriuretic peptide-converting enzyme, 180 kDa soluble fragment is produced by cleavage by ADAM10, while 160 kDa and 100 kDa soluble fragments are produced by autocatalytic cleavage. Cleavage by ADAM10 to produce soluble 180 kDa soluble fragment takes place after the transmembrane region and before FZ 1. A disulfide bond links the activated corin protease fragment and the N-terminal propeptide. The disulfide bond also links the activated corin protease fragment with soluble fragments (100 kDa, 160 kDa and 180 kDa fragments). As to expression, highly expressed in heart. Expressed in heart myocytes. Also expressed in pregnant uterus. Detected in blood, in plasma as well as in serum (at protein level).

The protein localises to the cell membrane. It localises to the secreted. With respect to regulation, inhibited in a dose-dependent manner by non-specific trypsin-like serine protease inhibitors including benzamidine. Serine-type endopeptidase involved in atrial natriuretic peptide (NPPA) and brain natriuretic peptide (NPPB) processing. Converts through proteolytic cleavage the non-functional propeptides NPPA and NPPB into their active hormones, ANP and BNP(1-32) respectively, thereby regulating blood pressure in the heart and promoting natriuresis, diuresis and vasodilation. Proteolytic cleavage of pro-NPPA also plays a role in female pregnancy by promoting trophoblast invasion and spiral artery remodeling in uterus. Also acts as a regulator of sodium reabsorption in kidney. Functionally, has weaker endopeptidase activity compared to isoform 1. This Homo sapiens (Human) protein is Atrial natriuretic peptide-converting enzyme (CORIN).